A 118-amino-acid polypeptide reads, in one-letter code: Holo-[acyl-carrier-protein] synthase (118 aa).

Mg(2+) is bound by residues Asp-8 and Glu-58.

This sequence belongs to the P-Pant transferase superfamily. AcpS family. Mg(2+) is required as a cofactor.

It localises to the cytoplasm. It carries out the reaction apo-[ACP] + CoA = holo-[ACP] + adenosine 3',5'-bisphosphate + H(+). In terms of biological role, transfers the 4'-phosphopantetheine moiety from coenzyme A to a Ser of acyl-carrier-protein. The protein is Holo-[acyl-carrier-protein] synthase of Streptococcus uberis (strain ATCC BAA-854 / 0140J).